The chain runs to 282 residues: Nucleotide-binding protein ABO_0549 (282 aa).

An ATP-binding site is contributed by 8-15; the sequence is GRSGSGKT. Position 59–62 (59–62) interacts with GTP; sequence DARN.

The protein belongs to the RapZ-like family.

In terms of biological role, displays ATPase and GTPase activities. This Alcanivorax borkumensis (strain ATCC 700651 / DSM 11573 / NCIMB 13689 / SK2) protein is Nucleotide-binding protein ABO_0549.